A 147-amino-acid polypeptide reads, in one-letter code: uncharacterized protein (147 aa).

To B.subtilis XkdM.

This is an uncharacterized protein from Bacillus subtilis (strain 168).